A 594-amino-acid chain; its full sequence is Solute carrier family 13 member 1 (594 aa).

The next 5 membrane-spanning stretches (helical) occupy residues 13–33 (FLLV…IRTK), 40–60 (ILFV…ITAL), 77–97 (VASA…CLAT), 113–133 (VMMV…STAF), and 134–154 (LSMW…VEAV). An N-linked (GlcNAc...) asparagine glycan is attached at asparagine 174. A compositionally biased stretch (basic and acidic residues) spans 192 to 220 (TNEKKEKTKPAPGSSHDKGKVSRKMETEK). The interval 192-226 (TNEKKEKTKPAPGSSHDKGKVSRKMETEKNAVTGA) is disordered. Transmembrane regions (helical) follow at residues 239 to 259 (LMCL…ITGT), 283 to 303 (SWFL…WIWL), 347 to 367 (IVTL…DPGF), 380 to 400 (GYVT…LIPA), 461 to 481 (LSPL…LIVT), 487 to 507 (ASNP…AEAI), 511 to 531 (PLQI…LPVA), and 552 to 572 (AGLG…FTWI). N-linked (GlcNAc...) asparagine glycosylation occurs at asparagine 590.

This sequence belongs to the SLC13A/DASS transporter (TC 2.A.47) family. NADC subfamily. As to expression, highly expressed in kidney and ileum, detected at lower levels in duodenum/jejunum and colon, and at very low levels in cecum, testis, adrenal and adipose tissues. In terms of tissue distribution, expressed in the kidney.

The protein localises to the apical cell membrane. The catalysed reaction is sulfate(out) + 3 Na(+)(out) = sulfate(in) + 3 Na(+)(in). The enzyme catalyses selenate(out) + 3 Na(+)(out) = selenate(in) + 3 Na(+)(in). It carries out the reaction thiosulfate(out) + 3 Na(+)(out) = thiosulfate(in) + 3 Na(+)(in). Functionally, sodium:sulfate symporter that mediates sulfate reabsorption in the kidney and small intestine. Can also mediate the transport of selenate and thiosulfate. The polypeptide is Solute carrier family 13 member 1 (Slc13a1) (Mus musculus (Mouse)).